The following is a 609-amino-acid chain: Dihydroxy-acid dehydratase (609 aa).

Mg(2+) is bound at residue aspartate 81. Cysteine 122 provides a ligand contact to [2Fe-2S] cluster. 2 residues coordinate Mg(2+): aspartate 123 and lysine 124. Lysine 124 carries the post-translational modification N6-carboxylysine. Cysteine 195 serves as a coordination point for [2Fe-2S] cluster. Glutamate 491 is a Mg(2+) binding site. The Proton acceptor role is filled by serine 517.

Belongs to the IlvD/Edd family. As to quaternary structure, homodimer. Requires [2Fe-2S] cluster as cofactor. The cofactor is Mg(2+).

It carries out the reaction (2R)-2,3-dihydroxy-3-methylbutanoate = 3-methyl-2-oxobutanoate + H2O. It catalyses the reaction (2R,3R)-2,3-dihydroxy-3-methylpentanoate = (S)-3-methyl-2-oxopentanoate + H2O. The protein operates within amino-acid biosynthesis; L-isoleucine biosynthesis; L-isoleucine from 2-oxobutanoate: step 3/4. Its pathway is amino-acid biosynthesis; L-valine biosynthesis; L-valine from pyruvate: step 3/4. Functionally, functions in the biosynthesis of branched-chain amino acids. Catalyzes the dehydration of (2R,3R)-2,3-dihydroxy-3-methylpentanoate (2,3-dihydroxy-3-methylvalerate) into 2-oxo-3-methylpentanoate (2-oxo-3-methylvalerate) and of (2R)-2,3-dihydroxy-3-methylbutanoate (2,3-dihydroxyisovalerate) into 2-oxo-3-methylbutanoate (2-oxoisovalerate), the penultimate precursor to L-isoleucine and L-valine, respectively. The protein is Dihydroxy-acid dehydratase of Acinetobacter baumannii (strain ATCC 17978 / DSM 105126 / CIP 53.77 / LMG 1025 / NCDC KC755 / 5377).